We begin with the raw amino-acid sequence, 381 residues long: MPAVNLGMPKVPEVLAPRRKTRQISVGKVKVGGNAQVSVQSMTTTQTTNINATLQQIAELTATGCDIVRVAVPHQDDADVLHILAKKSQIPIIADIHFQPRYVFTAIDAGVGAVRVNPGNIRKFDDQVGAIAKAAKAAGTSIRIGVNAGSLHPSLLQKYGKATPEALVESAVWEASLFEEHDFHDFKISVKHNDPVIMVKAYRLLAERGDWPLHLGVTEAGPAFQGTIKSATAFGILLSEGIGDTIRVSLSAPPAEEVKVGLQILQSLNLRERKLEIVSCPSCGRAQVDVYSLAEQVTEGLKHVNVPLRVAVMGCVVNGPGEAREAELGVASGNGRGQIFVKGEVIKTVPESEIVQTLIEEANRLAAEMPAGSIGSPEILV.

4 residues coordinate [4Fe-4S] cluster: Cys280, Cys283, Cys315, and Glu322.

This sequence belongs to the IspG family. Requires [4Fe-4S] cluster as cofactor.

It carries out the reaction (2E)-4-hydroxy-3-methylbut-2-enyl diphosphate + oxidized [flavodoxin] + H2O + 2 H(+) = 2-C-methyl-D-erythritol 2,4-cyclic diphosphate + reduced [flavodoxin]. Its pathway is isoprenoid biosynthesis; isopentenyl diphosphate biosynthesis via DXP pathway; isopentenyl diphosphate from 1-deoxy-D-xylulose 5-phosphate: step 5/6. In terms of biological role, converts 2C-methyl-D-erythritol 2,4-cyclodiphosphate (ME-2,4cPP) into 1-hydroxy-2-methyl-2-(E)-butenyl 4-diphosphate. This chain is 4-hydroxy-3-methylbut-2-en-1-yl diphosphate synthase (flavodoxin), found in Clavibacter sepedonicus (Clavibacter michiganensis subsp. sepedonicus).